The chain runs to 428 residues: Histidine--tRNA ligase (428 aa).

It belongs to the class-II aminoacyl-tRNA synthetase family. In terms of assembly, homodimer.

The protein resides in the cytoplasm. The catalysed reaction is tRNA(His) + L-histidine + ATP = L-histidyl-tRNA(His) + AMP + diphosphate + H(+). The polypeptide is Histidine--tRNA ligase (Mesomycoplasma hyopneumoniae (strain 232) (Mycoplasma hyopneumoniae)).